The primary structure comprises 381 residues: Selenoprotein P (381 aa).

A signal peptide spans 1 to 19 (MWRSLGLALALCLLPSGGT). Residue asparagine 46 is glycosylated (N-linked (GlcNAc...) asparagine). A non-standard amino acid (selenocysteine) is located at residue selenocysteine 59. A glycan (N-linked (GlcNAc...) (complex) asparagine) is linked at asparagine 83. N-linked (GlcNAc...) asparagine glycans are attached at residues asparagine 119, asparagine 128, and asparagine 174. Residues 200–268 (TPSPHYHHEH…ENRDMPASED (69 aa)) are disordered. Basic residues predominate over residues 204-216 (HYHHEHHHNHGHQ). A compositionally biased stretch (polar residues) spans 218–230 (LGSSELSENQQPG). Residues 243 to 255 (LHHHHKHKGQHRQ) are compositionally biased toward basic residues. Serine 266 is modified (phosphoserine). Non-standard amino acids (selenocysteine) are located at selenocysteine 300, selenocysteine 318, and selenocysteine 330. Residue asparagine 338 is glycosylated (N-linked (GlcNAc...) asparagine). Residues selenocysteine 345, selenocysteine 352, selenocysteine 367, selenocysteine 369, selenocysteine 376, and selenocysteine 378 are each a non-standard amino acid (selenocysteine). Positions 355–381 (SQQLIPTEASASURUKNQAKKUEUPSN) are disordered.

Belongs to the selenoprotein P family. Phosphorylation sites are present in the extracellular medium. In terms of tissue distribution, made in the liver and heart and secreted into the plasma. It is also found in the kidney.

It is found in the secreted. In terms of biological role, might be responsible for some of the extracellular antioxidant defense properties of selenium or might be involved in the transport of selenium. May supply selenium to tissues such as brain and testis. The sequence is that of Selenoprotein P from Homo sapiens (Human).